We begin with the raw amino-acid sequence, 390 residues long: S-adenosylmethionine synthase (390 aa).

An ATP-binding site is contributed by His-15. Residue Asp-17 coordinates Mg(2+). Residue Glu-43 coordinates K(+). L-methionine contacts are provided by Glu-56 and Gln-99. Residues 99 to 109 form a flexible loop region; the sequence is QSPDINQGVDR. ATP is bound by residues 164–166, 230–231, Asp-239, 245–246, Ala-262, and Lys-266; these read DAK, RF, and RK. Position 239 (Asp-239) interacts with L-methionine. Lys-270 is an L-methionine binding site.

This sequence belongs to the AdoMet synthase family. Homotetramer; dimer of dimers. It depends on Mg(2+) as a cofactor. K(+) serves as cofactor.

It localises to the cytoplasm. The enzyme catalyses L-methionine + ATP + H2O = S-adenosyl-L-methionine + phosphate + diphosphate. Its pathway is amino-acid biosynthesis; S-adenosyl-L-methionine biosynthesis; S-adenosyl-L-methionine from L-methionine: step 1/1. Functionally, catalyzes the formation of S-adenosylmethionine (AdoMet) from methionine and ATP. The overall synthetic reaction is composed of two sequential steps, AdoMet formation and the subsequent tripolyphosphate hydrolysis which occurs prior to release of AdoMet from the enzyme. This is S-adenosylmethionine synthase from Photorhabdus laumondii subsp. laumondii (strain DSM 15139 / CIP 105565 / TT01) (Photorhabdus luminescens subsp. laumondii).